The following is a 154-amino-acid chain: Protein E6 (154 aa).

Zinc fingers lie at residues 30-66 and 103-139; these read CIFC…CVKC and CCKC…CLHC.

It belongs to the papillomaviridae E6 protein family. In terms of assembly, forms homodimers. Interacts with ubiquitin-protein ligase UBE3A/E6-AP; this interaction stimulates UBE3A ubiquitin activity. Interacts with host TP53 and EP300; this interaction inhibits TP53 activity.

Its subcellular location is the host cytoplasm. The protein resides in the host nucleus. Functionally, plays a major role in the induction and maintenance of cellular transformation. E6 associates with host UBE3A/E6-AP ubiquitin-protein ligase and modulates its activity. Sequesters tumor suppressor TP53 in the host cytoplasm and modulates its activity by interacting with host EP300 that results in the reduction of TP53 acetylation and activation. In turn, apoptosis induced by DNA damage is inhibited. E6 also protects host keratinocytes from apoptosis by mediating the degradation of host BAK1. May also inhibit host immune response. The sequence is that of Protein E6 from Human papillomavirus 7.